A 556-amino-acid polypeptide reads, in one-letter code: Potassium-transporting ATPase potassium-binding subunit (556 aa).

The next 10 membrane-spanning stretches (helical) occupy residues 5-25 (LAGILFLASLVIALVAVHVPL), 65-85 (SVLAFSAVSLLFLFILQLVQG), 133-153 (GLAVQNFVSAAVGMAVAIALV), 176-196 (IRILLPISVIAAILLITGGAI), 249-269 (PTTWTNWIEIFLLLVIAFSLP), 283-303 (YAIVGVQAVLAVISWSATLFF), 377-397 (AGLYGILILAVITVFVAGLMV), 415-435 (LAATYFLVTPLIVLTGTAVAM), 483-503 (ALGLAMVFGRFLPIILALALA), and 526-546 (FVGMVAGVTLILVALTFLPML).

Belongs to the KdpA family. As to quaternary structure, the system is composed of three essential subunits: KdpA, KdpB and KdpC.

The protein resides in the cell membrane. Its function is as follows. Part of the high-affinity ATP-driven potassium transport (or Kdp) system, which catalyzes the hydrolysis of ATP coupled with the electrogenic transport of potassium into the cytoplasm. This subunit binds the extracellular potassium ions and delivers the ions to the membrane domain of KdpB through an intramembrane tunnel. The chain is Potassium-transporting ATPase potassium-binding subunit from Mycolicibacterium vanbaalenii (strain DSM 7251 / JCM 13017 / BCRC 16820 / KCTC 9966 / NRRL B-24157 / PYR-1) (Mycobacterium vanbaalenii).